The primary structure comprises 266 residues: 3-methyl-2-oxobutanoate hydroxymethyltransferase (266 aa).

Mg(2+)-binding residues include Asp-45 and Asp-84. Residues 45–46 (DS), Asp-84, and Lys-113 contribute to the 3-methyl-2-oxobutanoate site. Residue Glu-115 participates in Mg(2+) binding. Residue Glu-183 is the Proton acceptor of the active site.

It belongs to the PanB family. As to quaternary structure, homodecamer; pentamer of dimers. Mg(2+) serves as cofactor.

It is found in the cytoplasm. It carries out the reaction 3-methyl-2-oxobutanoate + (6R)-5,10-methylene-5,6,7,8-tetrahydrofolate + H2O = 2-dehydropantoate + (6S)-5,6,7,8-tetrahydrofolate. It participates in cofactor biosynthesis; (R)-pantothenate biosynthesis; (R)-pantoate from 3-methyl-2-oxobutanoate: step 1/2. Functionally, catalyzes the reversible reaction in which hydroxymethyl group from 5,10-methylenetetrahydrofolate is transferred onto alpha-ketoisovalerate to form ketopantoate. The polypeptide is 3-methyl-2-oxobutanoate hydroxymethyltransferase (Coxiella burnetii (strain CbuK_Q154) (Coxiella burnetii (strain Q154))).